The primary structure comprises 556 residues: Polypyrimidine tract-binding protein 1 (556 aa).

Met-1 carries the post-translational modification N-acetylmethionine. Residue Ser-16 is modified to Phosphoserine. Positions 35-54 (ASAANGNDSKKFKGDNRSTG) are disordered. RRM domains follow at residues 58–142 (RVIH…SSPN), 183–259 (LRII…FSKL), and 362–436 (SVLL…LSKH). Residue Lys-64 forms a Glycyl lysine isopeptide (Lys-Gly) (interchain with G-Cter in SUMO2) linkage. Tyr-126 carries the post-translational modification Phosphotyrosine. The residue at position 137 (Thr-137) is a Phosphothreonine. Ser-140 carries the phosphoserine modification. Lys-217 participates in a covalent cross-link: Glycyl lysine isopeptide (Lys-Gly) (interchain with G-Cter in SUMO2). Positions 436–458 (HQSVQLPREGQEDQGLTKDYGSS) are disordered. A Phosphoserine modification is found at Ser-458. Residues 479 to 554 (ATLHLSNIPP…HHLRVSFSKS (76 aa)) enclose the RRM 4 domain.

Monomer. Part of a ternary complex containing KHSRP, PTBP1, PTBP2 and HNRPH1. Interacts with RAVER1 and SFPQ.

Its subcellular location is the nucleus. Its function is as follows. Plays a role in pre-mRNA splicing and in the regulation of alternative splicing events. Activates exon skipping of its own pre-mRNA during muscle cell differentiation. Binds to the polypyrimidine tract of introns. May promote RNA looping when bound to two separate polypyrimidine tracts in the same pre-mRNA. May promote the binding of U2 snRNP to pre-mRNA. Cooperates with RAVER1 to modulate switching between mutually exclusive exons during maturation of the TPM1 pre-mRNA. Represses the splicing of MAPT/Tau exon 10. Binds to polypyrimidine-rich controlling element (PCE) of CFTR and promotes exon skipping of CFTR exon 9, thereby antagonizing TIA1 and its role in exon inclusion of CFTR exon 9. Plays a role in the splicing of pyruvate kinase PKM by binding repressively to a polypyrimidine tract flanking PKM exon 9, inhibiting exon 9 inclusion and resulting in exon 10 inclusion and production of the PKM M2 isoform. The sequence is that of Polypyrimidine tract-binding protein 1 (Ptbp1) from Rattus norvegicus (Rat).